A 414-amino-acid polypeptide reads, in one-letter code: Proton/glutamate-aspartate symporter (414 aa).

The Cytoplasmic portion of the chain corresponds to 1 to 3 (MKK). The helical transmembrane segment at 4 to 24 (LIAFQILIALAVGAVIGHFFP) threads the bilayer. The Extracellular segment spans residues 25–42 (DFGMALRPVGDGFIRLIK). A helical membrane pass occupies residues 43–63 (MIVVPIVFSTIVIGAAGSGSM). The Cytoplasmic segment spans residues 64–73 (KKMGSLGIKT). A helical transmembrane segment spans residues 74 to 94 (IIWFEVITTLVLGLGLLLANV). Over 95–144 (LKPGVGLDLSHLAKKDIHELSGYTDKVVDFKQMILDIIPTNIIDVMARND) the chain is Extracellular. Residues 145–165 (LLAVIFFAILFGVAAAGIGKA) traverse the membrane as a helical segment. Over 166–182 (SEPVMKFFESTAQIMFK) the chain is Cytoplasmic. The helical transmembrane segment at 183 to 203 (LTQIVMVTAPIGVLALMAASV) threads the bilayer. At 204 to 219 (GQYGIELLLPMFKLVG) the chain is on the extracellular side. The helical transmembrane segment at 220 to 240 (TVFLGLFLILFVLFPLVGLIF) threads the bilayer. Residue glutamine 241 is a topological domain, cytoplasmic. Residues 242–262 (IKYFEVLKMIWDLFLIAFSTT) form a helical membrane-spanning segment. Topologically, residues 263 to 300 (STETILPQLMDRMEKYGCPKRVVSFVVPSGLSLNCDGS) are extracellular. A helical membrane pass occupies residues 301 to 321 (SLYLSVSCIFLAQAFQVDMTL). The Cytoplasmic portion of the chain corresponds to 322-324 (SQQ). Helical transmembrane passes span 325–345 (LLMM…PSGS) and 346–366 (LVVL…VAII). The Cytoplasmic segment spans residues 367-414 (AGVDRVMDMARTGVNVPGHAIACIVVSKWEKAFRQKEWVSANSQTESI).

Belongs to the dicarboxylate/amino acid:cation symporter (DAACS) (TC 2.A.23) family.

The protein localises to the cell membrane. Its activity is regulated as follows. Glutamate uptake is inhibited by beta-hydroxyaspartate and cysteic acid. Its function is as follows. Catalyzes the proton-dependent, binding-protein-independent transport of glutamate and aspartate. In Bacillus subtilis (strain 168), this protein is Proton/glutamate-aspartate symporter.